The chain runs to 103 residues: Nucleoid-associated protein CFF8240_0066 (103 aa).

This sequence belongs to the YbaB/EbfC family. As to quaternary structure, homodimer.

The protein localises to the cytoplasm. It is found in the nucleoid. In terms of biological role, binds to DNA and alters its conformation. May be involved in regulation of gene expression, nucleoid organization and DNA protection. The sequence is that of Nucleoid-associated protein CFF8240_0066 from Campylobacter fetus subsp. fetus (strain 82-40).